Consider the following 231-residue polypeptide: Flagellar L-ring protein (231 aa).

An N-terminal signal peptide occupies residues Met1–Gly18. Cys19 carries the N-palmitoyl cysteine lipid modification. Cys19 is lipidated: S-diacylglycerol cysteine. Residues Leu118–Ser141 are disordered.

Belongs to the FlgH family. The basal body constitutes a major portion of the flagellar organelle and consists of four rings (L,P,S, and M) mounted on a central rod.

The protein resides in the cell outer membrane. It is found in the bacterial flagellum basal body. Assembles around the rod to form the L-ring and probably protects the motor/basal body from shearing forces during rotation. The sequence is that of Flagellar L-ring protein from Pseudomonas paraeruginosa (strain DSM 24068 / PA7) (Pseudomonas aeruginosa (strain PA7)).